Consider the following 1550-residue polypeptide: Adhesion G protein-coupled receptor L3 (1550 aa).

The first 19 residues, 1 to 19 (MCPPQLFILMMLLAPVVHG), serve as a signal peptide directing secretion. Residues 20–948 (GKHNERHPAL…VHDLLLDVIT (929 aa)) are Extracellular-facing. Positions 34-80 (RHAEHSPGGPLPPRHLLQQPAAERSTAHRGQGPRGTARGVRGPGAPG) are disordered. Positions 103–192 (SCESYPIELR…KYLEVQYECV (90 aa)) constitute an SUEL-type lectin domain. 5 cysteine pairs are disulfide-bonded: Cys104-Cys134, Cys113-Cys191, Cys146-Cys178, Cys159-Cys165, and Cys203-Cys385. A glycan (N-linked (GlcNAc...) asparagine) is linked at Asn161. Residues 202–461 (LCPGLLKGVY…VVKYSLDFGP (260 aa)) form the Olfactomedin-like domain. The segment at 317–347 (YHDTSPYRWGGKSDIDLAVDENGLWVIYATE) is interaction with FLRT3. Ca(2+) is bound by residues Asp332, Asn380, Ala381, and Val435. Residues 518–538 (NLGRSTTPSLPGRRNRSTSTP) are disordered. Asn532, Asn616, Asn839, Asn884, and Asn910 each carry an N-linked (GlcNAc...) asparagine glycan. Positions 755 to 934 (DIVRENTDNI…AVLMAHVEVK (180 aa)) constitute a GAIN-B domain. Disulfide bonds link Cys885–Cys916 and Cys904–Cys918. Residues 885–934 (CSFWSYSKRTMTGYWSTQGCRLLTTNKTHTTCSCNHLTNFAVLMAHVEVK) form a GPS region. The segment at 922–938 (TNFAVLMAHVEVKHSDA) is stachel. A helical membrane pass occupies residues 949-969 (WVGILLSLVCLLICIFTFCFF). At 970-977 (RGLQSDRN) the chain is on the cytoplasmic side. Residues 978 to 998 (TIHKNLCISLFVAELLFLIGI) traverse the membrane as a helical segment. A glycan (N-linked (GlcNAc...) asparagine) is linked at Asn999. The Extracellular portion of the chain corresponds to 999–1006 (NRTDQPIA). A helical membrane pass occupies residues 1007–1027 (CAVFAALLHFFFLAAFTWMFL). The Cytoplasmic segment spans residues 1028-1048 (EGVQLYIMLVEVFESEHSRRK). A helical transmembrane segment spans residues 1049 to 1069 (YFYLVGYGMPALIVAVSAAVD). The Extracellular portion of the chain corresponds to 1070–1087 (YRSYGTDKVCWLRLDTYF). The chain crosses the membrane as a helical span at residues 1088 to 1108 (IWSFIGPATLIIMLNVIFLGI). The Cytoplasmic segment spans residues 1109–1141 (ALYKMFHHTAILKPESGCLDNINYEDNRPFIKS). Residues 1142-1162 (WVIGAIALLCLLGLTWAFGLM) form a helical membrane-spanning segment. Residues 1163–1168 (YINEST) lie on the Extracellular side of the membrane. A glycan (N-linked (GlcNAc...) asparagine) is linked at Asn1165. Residues 1169 to 1189 (VIMAYLFTIFNSLQGMFIFIF) form a helical membrane-spanning segment. The Cytoplasmic portion of the chain corresponds to 1190 to 1550 (HCVLQKKVRK…KGPAHLVTSL (361 aa)). The tract at residues 1213–1236 (KSTESSIGSGKTSGSRTPGRYSTG) is disordered. Ser1253 carries the phosphoserine modification. Disordered regions lie at residues 1410–1435 (LLPP…PQDH) and 1528–1550 (PPNK…VTSL). Residue Ser1535 is modified to Phosphoserine. The PDZ-binding motif lies at 1545–1550 (HLVTSL).

The protein belongs to the G-protein coupled receptor 2 family. LN-TM7 subfamily. Heterodimer of 2 chains generated by proteolytic processing; the large extracellular N-terminal fragment and the membrane-bound C-terminal fragment predominantly remain associated and non-covalently linked. Interacts (via olfactomedin-like domain) with FLRT1 (via extracellular domain). Interacts (via olfactomedin-like domain) with FLRT2 (via extracellular domain). Interacts (via olfactomedin-like domain) with FLRT3 (via extracellular domain); the interaction is direct. Interacts (via extracellular domain) with TENM1. Interacts (via extracellular domain) with TENM2. Interacts (via extracellular domain) with TENM3. Identified in a complex with FLRT3 and UNC5B; does not interact with UNC5B by itself. Identified in a complex with FLRT3 and UNC5D; does not interact with UNC5D by itself. As to quaternary structure, interacts (via PDZ-binding motif) with SHANK3. Interacts (via PDZ-binding motif) with DLG4. Post-translationally, autoproteolytically processed at the GPS region of the GAIN-B domain; this cleavage modulates receptor activity. Predominantly expressed in brain, followed by heart, placenta, pancreas, kidney and testis.

Its subcellular location is the cell membrane. The protein resides in the postsynaptic cell membrane. The protein localises to the cell projection. It localises to the axon. It is found in the cell junction. With respect to regulation, forms a heterodimer of 2 chains generated by proteolytic processing that remain associated through non-covalent interactions mediated by the GAIN-B domain. In the inactivated receptor, the Stachel sequence (also named stalk) is embedded in the GAIN-B domain, where it adopts a beta-strand conformation. On activation, the Stachel moves into the 7 transmembrane region and adopts a twisted hook-shaped configuration that forms contacts within the receptor, leading to coupling of a G-alpha protein, which activates signaling. The cleaved GAIN-B and N-terminal domains can then dissociate from the rest of the receptor. Orphan adhesion G-protein coupled receptor (aGPCR), which mediates synapse specificity. Ligand binding causes a conformation change that triggers signaling via guanine nucleotide-binding proteins (G proteins) and modulates the activity of downstream effectors. ADGRL3 is coupled with different classes of G alpha proteins, such as G(12)/G(13), G(s), G(i) or G(q), depending on the context. Coupling to G(12)/G(13) G proteins, which mediates the activation Rho small GTPases is the most efficient. Following G-protein coupled receptor activation, associates with cell adhesion molecules that are expressed at the surface of adjacent cells to direct synapse specificity. Specifically mediates the establishment of Schaffer-collateral synapses formed by CA3-region axons on CA1-region pyramidal neurons in the hippocampus. Localizes to postsynaptic spines in excitatory synapses in the S.oriens and S.radiatum and interacts with presynaptic cell adhesion molecules FLRT3 and TENM2, promoting synapse formation. Plays a role in the development of glutamatergic synapses in the cortex. Important in determining the connectivity rates between the principal neurons in the cortex. Its function is as follows. Orphan adhesion G-protein coupled receptor (aGPCR), which mediates synapse specificity. Ligand binding causes a conformation change that triggers signaling via guanine nucleotide-binding proteins (G proteins) and modulates the activity of downstream effectors, such as adenylate cyclase. Isoform 1 is specifically coupled to G(s) G proteins and mediates activation of adenylate cyclase activity. Following G-protein coupled receptor activation, undergoes liquid-liquid phase transition, associates with (1) cell adhesion molecules that are expressed at the surface of adjacent cells, as well as (2) PDZ-containing proteins, such as SHANK3 and DLG4, in the cytoplasm to direct synapse formation. This is Adhesion G protein-coupled receptor L3 from Rattus norvegicus (Rat).